The following is a 154-amino-acid chain: Large ribosomal subunit protein uL13 (154 aa).

The protein belongs to the universal ribosomal protein uL13 family. In terms of assembly, part of the 50S ribosomal subunit.

This protein is one of the early assembly proteins of the 50S ribosomal subunit, although it is not seen to bind rRNA by itself. It is important during the early stages of 50S assembly. The polypeptide is Large ribosomal subunit protein uL13 (Rhizobium meliloti (strain 1021) (Ensifer meliloti)).